We begin with the raw amino-acid sequence, 685 residues long: Sorbicillinoid biosynthetic cluster transcription factor sor4 (685 aa).

A compositionally biased stretch (low complexity) spans Met-1–Thr-14. The disordered stretch occupies residues Met-1–Leu-20. The zn(2)-C6 fungal-type DNA-binding region spans Cys-22–Cys-49. The disordered stretch occupies residues Gly-81–Ser-112.

The protein resides in the nucleus. In terms of biological role, transcription factor that acts as the main regulator of the gene cluster that mediates the biosynthesis of sorbicillinoids, a diverse group of yellow secondary metabolites that restrict growth of competing pathogenic fungi but not of bacteria. This Hypocrea jecorina (strain QM6a) (Trichoderma reesei) protein is Sorbicillinoid biosynthetic cluster transcription factor sor4.